The chain runs to 61 residues: Inner membrane protein p12 (61 aa).

Residues Leu16 to Met36 form a helical membrane-spanning segment.

It belongs to the asfivirus inner membrane protein p12 family. Homomultimer; disulfide-linked. Post-translationally, not glycosylated.

It is found in the virion membrane. In Ornithodoros (relapsing fever ticks), this protein is Inner membrane protein p12.